The following is a 478-amino-acid chain: Leukotoxin secretion protein D (478 aa).

Over 1-77 (MKIWLSGIYE…LAVAIVLASV (77 aa)) the chain is Cytoplasmic. A helical transmembrane segment spans residues 78 to 98 (SKVEIVATAPGKLTFSGRSKE). At 99-478 (IKPIENTIVQ…ESVTESLRER (380 aa)) the chain is on the periplasmic side.

This sequence belongs to the membrane fusion protein (MFP) (TC 8.A.1) family.

It is found in the cell inner membrane. Functionally, involved in the transport of the Leukotoxin. This is Leukotoxin secretion protein D (lktD) from Pasteurella haemolytica-like sp. (strain 5943B).